We begin with the raw amino-acid sequence, 708 residues long: Leukotoxin translocation ATP-binding protein LktB (708 aa).

One can recognise a Peptidase C39 domain in the interval 1 to 126 (MEANHQRNDL…ACYQGQLILV (126 aa)). The ABC transmembrane type-1 domain occupies 155 to 437 (FLETLIVSIF…LAQLWQDFQQ (283 aa)). A run of 5 helical transmembrane segments spans residues 159 to 179 (LIVS…FQVV), 192 to 212 (LNII…LSGL), 270 to 290 (ALTS…MWYY), 296 to 316 (LVIL…SPIL), and 389 to 409 (VMVI…LSIG). Residues 469–704 (ISFKNIRFRY…SNGLYSYLHQ (236 aa)) form the ABC transporter domain. Position 503-510 (503-510 (GRSGSGKS)) interacts with ATP.

Belongs to the ABC transporter superfamily. Protein-1 exporter (TC 3.A.1.109) family. In terms of assembly, homodimer.

The protein localises to the cell inner membrane. It catalyses the reaction ATP + H2O + proteinSide 1 = ADP + phosphate + proteinSide 2.. Functionally, part of the ABC transporter complex LktBD involved in leukotoxin export. Transmembrane domains (TMD) form a pore in the inner membrane and the ATP-binding domain (NBD) is responsible for energy generation. This chain is Leukotoxin translocation ATP-binding protein LktB (lktB), found in Mannheimia haemolytica (Pasteurella haemolytica).